The chain runs to 815 residues: Translation initiation factor IF-2 (815 aa).

In terms of domain architecture, tr-type G spans 315–482 (ARPPVVTIMG…AISLTAEVLE (168 aa)). The G1 stretch occupies residues 324–331 (GHVDHGKT). A GTP-binding site is contributed by 324–331 (GHVDHGKT). A G2 region spans residues 349–353 (GITQH). Positions 370-373 (DTPG) are G3. GTP contacts are provided by residues 370-374 (DTPGH) and 424-427 (NKID). The interval 424-427 (NKID) is G4. The interval 460–462 (SAY) is G5.

It belongs to the TRAFAC class translation factor GTPase superfamily. Classic translation factor GTPase family. IF-2 subfamily.

Its subcellular location is the cytoplasm. One of the essential components for the initiation of protein synthesis. Protects formylmethionyl-tRNA from spontaneous hydrolysis and promotes its binding to the 30S ribosomal subunits. Also involved in the hydrolysis of GTP during the formation of the 70S ribosomal complex. The sequence is that of Translation initiation factor IF-2 from Ruthia magnifica subsp. Calyptogena magnifica.